The sequence spans 354 residues: tRNA N6-adenosine threonylcarbamoyltransferase (354 aa).

Fe cation is bound by residues histidine 111 and histidine 115. Substrate is bound by residues 134–138 (LVSGG), aspartate 167, glycine 180, and asparagine 279. Residue aspartate 319 participates in Fe cation binding.

It belongs to the KAE1 / TsaD family. It depends on Fe(2+) as a cofactor.

Its subcellular location is the cytoplasm. The enzyme catalyses L-threonylcarbamoyladenylate + adenosine(37) in tRNA = N(6)-L-threonylcarbamoyladenosine(37) in tRNA + AMP + H(+). Functionally, required for the formation of a threonylcarbamoyl group on adenosine at position 37 (t(6)A37) in tRNAs that read codons beginning with adenine. Is involved in the transfer of the threonylcarbamoyl moiety of threonylcarbamoyl-AMP (TC-AMP) to the N6 group of A37, together with TsaE and TsaB. TsaD likely plays a direct catalytic role in this reaction. This Neisseria gonorrhoeae (strain ATCC 700825 / FA 1090) protein is tRNA N6-adenosine threonylcarbamoyltransferase.